We begin with the raw amino-acid sequence, 763 residues long: Dual specificity tyrosine-phosphorylation-regulated kinase 1A (763 aa).

Position 14 is a phosphoserine (S14). The segment at 32–57 (GQMPHSHQYSDRRQPNISDQQVSALS) is disordered. The span at 46–57 (PNISDQQVSALS) shows a compositional bias: polar residues. Y111 is modified (phosphotyrosine; by autocatalysis). The disordered stretch occupies residues 115-136 (KKRRHQQGQGDDSSHKKERKVY). A Bipartite nuclear localization signal motif is present at residues 117–134 (RRHQQGQGDDSSHKKERK). At Y140 the chain carries Phosphotyrosine; by autocatalysis. Y145 carries the phosphotyrosine modification. A Phosphotyrosine; by autocatalysis modification is found at Y159. The region spanning 159–479 (YEIDSLIGKG…PYYALQHSFF (321 aa)) is the Protein kinase domain. Position 165–173 (165–173 (IGKGSFGQV)) interacts with ATP. Residue Y177 is modified to Phosphotyrosine; by autocatalysis. Position 188 (K188) interacts with ATP. Phosphotyrosine; by autocatalysis is present on Y219. ATP is bound at residue 238–241 (FEML). The active-site Proton acceptor is the D287. Residue S310 is modified to Phosphoserine; by autocatalysis. Y319 and Y321 each carry phosphotyrosine; by autocatalysis. T402 carries the post-translational modification Phosphothreonine; by autocatalysis. A disordered region spans residues 408 to 442 (TKDGKREYKPPGTRKLHNILGVETGGPGGRRAGES). A Phosphotyrosine; by autocatalysis modification is found at Y449. Residues 485-501 (EGTNTSNSVSTSPAMEQ) show a composition bias toward polar residues. 3 disordered regions span residues 485–540 (EGTN…HSGG), 596–679 (NALH…GNQA), and 744–763 (DREE…VASS). Low complexity predominate over residues 502–525 (SQSSGTTSSTSSSSGGSSGTSNSG). Residues S529 and S538 each carry the phosphoserine modification. The interval 595–625 (QNALHHHHGNSSHHHHHHHHHHHHHGQQALG) is histidine-rich domain (HRD). The segment covering 598–620 (LHHHHGNSSHHHHHHHHHHHHHG) has biased composition (basic residues). Positions 634-645 (NSPTNSSSTQDS) are enriched in polar residues. A compositionally biased stretch (low complexity) spans 654 to 672 (SMTSLSSSTTSSSTSSSST). Phosphoserine occurs at positions 748 and 758. Residues 754-763 (CVQQSPVASS) show a composition bias toward polar residues.

It belongs to the protein kinase superfamily. CMGC Ser/Thr protein kinase family. MNB/DYRK subfamily. In terms of assembly, interacts with RAD54L2/ARIP4. Interacts with CRY2. Interacts with RANBP9. Interacts with WDR68. Interacts with SIRT1. As to quaternary structure, (Microbial infection) Interacts with human adenovirus 5 E1A protein. Post-translationally, autophosphorylated on numerous tyrosine residues. Can also autophosphorylate on serine and threonine residues (in vitro). Ubiquitous. Highest levels in skeletal muscle, testis, fetal lung and fetal kidney.

It is found in the nucleus. Its subcellular location is the nucleus speckle. The catalysed reaction is L-seryl-[protein] + ATP = O-phospho-L-seryl-[protein] + ADP + H(+). It catalyses the reaction L-threonyl-[protein] + ATP = O-phospho-L-threonyl-[protein] + ADP + H(+). The enzyme catalyses L-tyrosyl-[protein] + ATP = O-phospho-L-tyrosyl-[protein] + ADP + H(+). It carries out the reaction [DNA-directed RNA polymerase] + ATP = phospho-[DNA-directed RNA polymerase] + ADP + H(+). Its activity is regulated as follows. Inhibited by RANBP9. Inhibited by harmine, leucettamine B and leucettine L41. In terms of biological role, dual-specificity kinase which possesses both serine/threonine and tyrosine kinase activities. Exhibits a substrate preference for proline at position P+1 and arginine at position P-3. Plays an important role in double-strand breaks (DSBs) repair following DNA damage. Mechanistically, phosphorylates RNF169 and increases its ability to block accumulation of TP53BP1 at the DSB sites thereby promoting homologous recombination repair (HRR). Also acts as a positive regulator of transcription by acting as a CTD kinase that mediates phosphorylation of the CTD (C-terminal domain) of the large subunit of RNA polymerase II (RNAP II) POLR2A. May play a role in a signaling pathway regulating nuclear functions of cell proliferation. Modulates alternative splicing by phosphorylating the splice factor SRSF6. Has pro-survival function and negatively regulates the apoptotic process. Promotes cell survival upon genotoxic stress through phosphorylation of SIRT1. This in turn inhibits p53/TP53 activity and apoptosis. Phosphorylates SEPTIN4, SEPTIN5 and SF3B1 at 'Thr-434'. The protein is Dual specificity tyrosine-phosphorylation-regulated kinase 1A of Homo sapiens (Human).